The primary structure comprises 332 residues: Nucleoid-associated protein VP2128 (332 aa).

It belongs to the YejK family.

The protein localises to the cytoplasm. It is found in the nucleoid. This is Nucleoid-associated protein VP2128 from Vibrio parahaemolyticus serotype O3:K6 (strain RIMD 2210633).